Reading from the N-terminus, the 99-residue chain is Large ribosomal subunit protein bL21 (99 aa).

Belongs to the bacterial ribosomal protein bL21 family. As to quaternary structure, part of the 50S ribosomal subunit. Contacts protein L20.

This protein binds to 23S rRNA in the presence of protein L20. In Mesomycoplasma hyopneumoniae (strain 232) (Mycoplasma hyopneumoniae), this protein is Large ribosomal subunit protein bL21.